We begin with the raw amino-acid sequence, 225 residues long: Probable proteasome subunit beta type-6 (225 aa).

The protein belongs to the peptidase T1B family. As to quaternary structure, the 26S proteasome consists of a 20S proteasome core and two 19S regulatory subunits. The 20S proteasome core is composed of 28 subunits that are arranged in four stacked rings, resulting in a barrel-shaped structure. The two end rings are each formed by seven alpha subunits, and the two central rings are each formed by seven beta subunits. The catalytic chamber with the active sites is on the inside of the barrel.

Its subcellular location is the cytoplasm. It is found in the nucleus. In terms of biological role, non-catalytic component of the proteasome, a multicatalytic proteinase complex which is characterized by its ability to cleave peptides with Arg, Phe, Tyr, Leu, and Glu adjacent to the leaving group at neutral or slightly basic pH. The proteasome has an ATP-dependent proteolytic activity. This Schizosaccharomyces pombe (strain 972 / ATCC 24843) (Fission yeast) protein is Probable proteasome subunit beta type-6 (pam1).